Consider the following 76-residue polypeptide: Omega-conotoxin-like TxO5 (76 aa).

A signal peptide spans 1–22; that stretch reads MKLTCMVIVAVLFLTAWTFVTA. A propeptide spanning residues 23 to 50 is cleaved from the precursor; it reads ITSNGLENLFPNAHHEMKNPEASKLNKR. 3 disulfides stabilise this stretch: Cys-51-Cys-66, Cys-58-Cys-70, and Cys-65-Cys-75.

The protein belongs to the conotoxin O1 superfamily. Expressed by the venom duct.

The protein localises to the secreted. In terms of biological role, omega-conotoxins act at presynaptic membranes, they bind and block voltage-gated calcium channels (Cav). The sequence is that of Omega-conotoxin-like TxO5 (TXO5) from Conus textile (Cloth-of-gold cone).